A 311-amino-acid polypeptide reads, in one-letter code: Formimidoylglutamase (311 aa).

The Mn(2+) site is built by His127, Asp152, His154, Asp156, Cys236, and Asp238.

It belongs to the arginase family. It depends on Mn(2+) as a cofactor.

The catalysed reaction is N-formimidoyl-L-glutamate + H2O = formamide + L-glutamate. Its pathway is amino-acid degradation; L-histidine degradation into L-glutamate; L-glutamate from N-formimidoyl-L-glutamate (hydrolase route): step 1/1. In terms of biological role, catalyzes the conversion of N-formimidoyl-L-glutamate to L-glutamate and formamide. In Macrococcus caseolyticus (strain JCSC5402) (Macrococcoides caseolyticum), this protein is Formimidoylglutamase.